The primary structure comprises 138 residues: Large ribosomal subunit protein uL14 (138 aa).

The protein belongs to the universal ribosomal protein uL14 family. As to quaternary structure, part of the 50S ribosomal subunit. Forms a cluster with proteins L3 and L24e, part of which may contact the 16S rRNA in 2 intersubunit bridges.

In terms of biological role, binds to 23S rRNA. Forms part of two intersubunit bridges in the 70S ribosome. This chain is Large ribosomal subunit protein uL14, found in Sulfurisphaera tokodaii (strain DSM 16993 / JCM 10545 / NBRC 100140 / 7) (Sulfolobus tokodaii).